A 515-amino-acid chain; its full sequence is tRNA-2-methylthio-N(6)-dimethylallyladenosine synthase (515 aa).

The 116-residue stretch at 25-140 (KTYQVRTFGC…LPALLNRARH (116 aa)) folds into the MTTase N-terminal domain. Positions 34, 69, 103, 177, 181, and 184 each coordinate [4Fe-4S] cluster. The Radical SAM core domain occupies 163 to 393 (RDSVYAGWVS…TALQDRIAAE (231 aa)). Residues 396-466 (AKQLGRKVEV…AFHLVADPAG (71 aa)) enclose the TRAM domain. Residues 482-515 (DRSQADSCGVPAAGAASGKAGVSLGMPSLPTRRA) are disordered. The segment covering 490 to 506 (GVPAAGAASGKAGVSLG) has biased composition (low complexity).

This sequence belongs to the methylthiotransferase family. MiaB subfamily. In terms of assembly, monomer. Requires [4Fe-4S] cluster as cofactor.

Its subcellular location is the cytoplasm. It carries out the reaction N(6)-dimethylallyladenosine(37) in tRNA + (sulfur carrier)-SH + AH2 + 2 S-adenosyl-L-methionine = 2-methylsulfanyl-N(6)-dimethylallyladenosine(37) in tRNA + (sulfur carrier)-H + 5'-deoxyadenosine + L-methionine + A + S-adenosyl-L-homocysteine + 2 H(+). Functionally, catalyzes the methylthiolation of N6-(dimethylallyl)adenosine (i(6)A), leading to the formation of 2-methylthio-N6-(dimethylallyl)adenosine (ms(2)i(6)A) at position 37 in tRNAs that read codons beginning with uridine. The sequence is that of tRNA-2-methylthio-N(6)-dimethylallyladenosine synthase from Paenarthrobacter aurescens (strain TC1).